Consider the following 800-residue polypeptide: Protein SPT2 homolog (800 aa).

Residues 1–687 are important for interaction with DNA; it reads MDFHSVLRMA…PGHRPNMQPP (687 aa). Residues 53–82 are a coiled coil; sequence QEIQNKEVEAKRKKEGLLAKRKELKHDRKA. Disordered regions lie at residues 70–173, 197–646, and 661–698; these read LAKR…PALN, KEER…MAKP, and VPKSINGHMNGMRSAVPPGHRPNMQPPGRPLPPITSSY. The segment covering 124 to 137 has biased composition (acidic residues); it reads TEEDEEYMTEEELY. Residues 155 to 164 are compositionally biased toward low complexity; it reads PQKVAKAAPG. Residues 196 to 224 adopt a coiled-coil conformation; the sequence is KKEERLRTAEELKELEFLERKAQKADRKD. Composition is skewed to basic and acidic residues over residues 197 to 226 and 249 to 259; these read KEERLRTAEELKELEFLERKAQKADRKDPM and HSVEKRSHENS. Polar residues predominate over residues 260–272; the sequence is KSSSTEQNGTFRK. Residues 273 to 295 show a composition bias toward basic and acidic residues; sequence SSSDNRSREEKSGSVFHTKDSKF. Low complexity-rich tracts occupy residues 328-360, 367-377, 390-424, 443-501, and 514-581; these read SGSTSLRPSSGGSSSVSGRPSGSSEKPGSSSGK, SSSARSSSGSG, GASGSGSARSVGESGSRSGKPTGASGSGLARSVGA, GVSG…SVSG, and GAPG…ASSS. The segment covering 608–626 has biased composition (polar residues); sequence NSVRHNTTSISVSARSSLG. Residues 684-693 show a composition bias toward pro residues; it reads MQPPGRPLPP. Positions 688-800 are important for interaction with histones; the sequence is GRPLPPITSS…LKSAKKMKSR (113 aa). Residues 756–800 are a coiled coil; that stretch reads REQQKEEARSLRLGIQEDLEELRREEEELKQKAKQLKSAKKMKSR.

It belongs to the SPT2 family. As to quaternary structure, interacts with histones. Interacts with a heterotetrameric complex formed by histone H3 and H4, especially when the histone tetramer is not bound to DNA.

It is found in the nucleus. The protein localises to the nucleolus. Functionally, histone chaperone that stabilizes pre-existing histone tetramers and regulates replication-independent histone exchange on chromatin. Required for normal chromatin refolding in the coding region of transcribed genes, and for the suppression of spurious transcription. Binds DNA and histones and promotes nucleosome assembly (in vitro). Facilitates formation of tetrameric histone complexes containing histone H3 and H4. Modulates RNA polymerase 1-mediated transcription. Binds DNA, with a preference for branched DNA species, such as Y-form DNA and Holliday junction DNA. This is Protein SPT2 homolog (spty2d1) from Xenopus laevis (African clawed frog).